The primary structure comprises 505 residues: L-carnitine/gamma-butyrobetaine antiporter (505 aa).

12 consecutive transmembrane segments (helical) span residues 10 to 30 (IEPK…WLTV), 51 to 71 (WGWA…WLVF), 92 to 112 (IFMM…SIEI), 143 to 163 (GPLP…FFFV), 195 to 215 (FYLV…TPLV), 231 to 251 (LDAI…ACGL), 263 to 283 (SYLS…SFIM), 316 to 336 (WTVF…IFLA), 347 to 367 (LCFG…TVLG), 403 to 423 (LSTA…VTLI), 446 to 466 (LLVR…LLAL), and 475 to 495 (AIIA…LSFI).

Belongs to the BCCT transporter (TC 2.A.15) family. CaiT subfamily. As to quaternary structure, homotrimer.

It localises to the cell inner membrane. The enzyme catalyses 4-(trimethylamino)butanoate(in) + (R)-carnitine(out) = 4-(trimethylamino)butanoate(out) + (R)-carnitine(in). The protein operates within amine and polyamine metabolism; carnitine metabolism. Its function is as follows. Catalyzes the exchange of L-carnitine for gamma-butyrobetaine. This Salmonella paratyphi A (strain ATCC 9150 / SARB42) protein is L-carnitine/gamma-butyrobetaine antiporter.